Consider the following 148-residue polypeptide: Probable histone H2B.2 (148 aa).

Positions 1–32 are enriched in basic and acidic residues; sequence MAPKGEKKPAEKKPAEEKKSTVAEKAPAEKKP. The segment at 1 to 57 is disordered; that stretch reads MAPKGEKKPAEKKPAEEKKSTVAEKAPAEKKPKAGKKLPKEGGSAAGEKKKKRSKKS. N6-acetyllysine occurs at positions 7, 36, and 37. Lys144 is covalently cross-linked (Glycyl lysine isopeptide (Lys-Gly) (interchain with G-Cter in ubiquitin)).

Belongs to the histone H2B family. The nucleosome is a histone octamer containing two molecules each of H2A, H2B, H3 and H4 assembled in one H3-H4 heterotetramer and two H2A-H2B heterodimers. The octamer wraps approximately 147 bp of DNA. Post-translationally, can be acetylated to form H2BK6ac, H2BK33ac and H2BK34ac. Monoubiquitinated to form H2BK143ub1; may give a specific tag for epigenetic transcriptional activation.

The protein resides in the nucleus. Its subcellular location is the chromosome. Core component of nucleosome. Nucleosomes wrap and compact DNA into chromatin, limiting DNA accessibility to the cellular machineries which require DNA as a template. Histones thereby play a central role in transcription regulation, DNA repair, DNA replication and chromosomal stability. DNA accessibility is regulated via a complex set of post-translational modifications of histones, also called histone code, and nucleosome remodeling. The sequence is that of Probable histone H2B.2 from Medicago truncatula (Barrel medic).